Consider the following 150-residue polypeptide: Phosphoribosyl-AMP cyclohydrolase (150 aa).

Residue aspartate 93 coordinates Mg(2+). A Zn(2+)-binding site is contributed by cysteine 94. Residues aspartate 95 and aspartate 97 each contribute to the Mg(2+) site. Zn(2+)-binding residues include cysteine 112 and cysteine 119.

Belongs to the PRA-CH family. In terms of assembly, homodimer. The cofactor is Mg(2+). Zn(2+) is required as a cofactor.

Its subcellular location is the cytoplasm. The enzyme catalyses 1-(5-phospho-beta-D-ribosyl)-5'-AMP + H2O = 1-(5-phospho-beta-D-ribosyl)-5-[(5-phospho-beta-D-ribosylamino)methylideneamino]imidazole-4-carboxamide. The protein operates within amino-acid biosynthesis; L-histidine biosynthesis; L-histidine from 5-phospho-alpha-D-ribose 1-diphosphate: step 3/9. Functionally, catalyzes the hydrolysis of the adenine ring of phosphoribosyl-AMP. In Rhizobium etli (strain ATCC 51251 / DSM 11541 / JCM 21823 / NBRC 15573 / CFN 42), this protein is Phosphoribosyl-AMP cyclohydrolase.